A 318-amino-acid chain; its full sequence is Beta-ketoacyl-[acyl-carrier-protein] synthase III (318 aa).

Residues cysteine 112 and histidine 245 contribute to the active site. Residues 246-250 form an ACP-binding region; that stretch reads QANLR. Asparagine 275 is an active-site residue.

The protein belongs to the thiolase-like superfamily. FabH family. In terms of assembly, homodimer.

It localises to the cytoplasm. The catalysed reaction is malonyl-[ACP] + acetyl-CoA + H(+) = 3-oxobutanoyl-[ACP] + CO2 + CoA. Its pathway is lipid metabolism; fatty acid biosynthesis. Functionally, catalyzes the condensation reaction of fatty acid synthesis by the addition to an acyl acceptor of two carbons from malonyl-ACP. Catalyzes the first condensation reaction which initiates fatty acid synthesis and may therefore play a role in governing the total rate of fatty acid production. Possesses both acetoacetyl-ACP synthase and acetyl transacylase activities. Its substrate specificity determines the biosynthesis of branched-chain and/or straight-chain of fatty acids. The sequence is that of Beta-ketoacyl-[acyl-carrier-protein] synthase III from Blochmanniella floridana.